We begin with the raw amino-acid sequence, 518 residues long: Squalene monooxygenase 1,2 (518 aa).

A run of 2 helical transmembrane segments spans residues 3–23 (MAFV…WTIF) and 48–68 (GPDV…YALA). Residues 58-59 (VG), 78-79 (ER), Arg86, Phe91, Arg158, Val174, Asp337, and Met350 contribute to the FAD site. A helical transmembrane segment spans residues 448–468 (LFYHLFVISLSSIGQLLSPFP).

It belongs to the squalene monooxygenase family. It depends on FAD as a cofactor.

It localises to the membrane. The enzyme catalyses squalene + reduced [NADPH--hemoprotein reductase] + O2 = (S)-2,3-epoxysqualene + oxidized [NADPH--hemoprotein reductase] + H2O + H(+). It functions in the pathway terpene metabolism; lanosterol biosynthesis; lanosterol from farnesyl diphosphate: step 2/3. Its function is as follows. Catalyzes the stereospecific oxidation of squalene to (S)-2,3-epoxysqualene, and is considered to be a rate-limiting enzyme in steroid biosynthesis. This chain is Squalene monooxygenase 1,2 (SQP1,2), found in Brassica napus (Rape).